The chain runs to 287 residues: Ret finger protein-like 4A (287 aa).

The RING-type; degenerate zinc finger occupies 11–53; sequence CPVCLKDLEEAVQLKCGYACCLQCLNSLQKEPDGEGLLCRFCS. The 199-residue stretch at 78 to 276 folds into the B30.2/SPRY domain; sequence EPKLKSVLTM…LSICSVINPS (199 aa).

Interacts with PSMB1, UBE2A and CCNB1.

It is found in the cytoplasm. Its subcellular location is the nucleus. The chain is Ret finger protein-like 4A (RFPL4A) from Homo sapiens (Human).